We begin with the raw amino-acid sequence, 131 residues long: Conotoxin Cal8.2 (131 aa).

The signal sequence occupies residues 1-19 (MKLLLTLLLGSALMCITLA). Positions 20–38 (DECGLGTHRPVKEVIDNVR) are excised as a propeptide.

Post-translationally, contains 4 disulfide bonds. Expressed by the venom duct.

It is found in the secreted. In terms of biological role, probable neurotoxin with unknown target. Possibly targets ion channels. The chain is Conotoxin Cal8.2 from Californiconus californicus (California cone).